The primary structure comprises 385 residues: AA13 family lytic polysaccharide monooxygenase NCU08746 (385 aa).

Residues 1–18 form the signal peptide; that stretch reads MKFSIISVALASAITVDA. His19 lines the Cu(2+) pocket. His19 carries the post-translational modification Methylhistidine. Residues 19–248 form the Chitin-binding type-4 domain; that stretch reads HGYLTIPFSR…AQVYLSCADI (230 aa). Residues Cys40 and Cys43 are joined by a disulfide bond. Asn54 is a glycosylation site (N-linked (GlcNAc...) asparagine). Cystine bridges form between Cys66–Cys245, Cys102–Cys203, Cys118–Cys145, Cys153–Cys161, Cys167–Cys173, and Cys181–Cys192. Position 109 (His109) interacts with Cu(2+). Tyr242 is a binding site for Cu(2+). A CBM20 domain is found at 278 to 385; sequence CTPAATVAVT…ESVAVESSWK (108 aa). Asn365 is a glycosylation site (N-linked (GlcNAc...) asparagine).

This sequence belongs to the polysaccharide monooxygenase AA13 family. It depends on Cu(2+) as a cofactor.

The protein localises to the secreted. The enzyme catalyses starch + reduced acceptor + O2 = D-glucono-1,5-lactone-terminated malto-oligosaccharides + short-chain malto-oligosaccharides + acceptor + H2O.. Starch-active lytic polysaccharide monooxygenase that oxidizes the C1 position of starch substrates, but not in cellulose or chitin. Catalysis by LPMOs requires the reduction of the active-site copper from Cu(II) to Cu(I) by a reducing agent and H(2)O(2) or O(2) as a cosubstrate. This is AA13 family lytic polysaccharide monooxygenase NCU08746 from Neurospora crassa (strain ATCC 24698 / 74-OR23-1A / CBS 708.71 / DSM 1257 / FGSC 987).